A 610-amino-acid polypeptide reads, in one-letter code: Zinc metalloproteinase-disintegrin-like 3a (610 aa).

Positions 1–19 (MIQVLLVTILAVFPYQGSS) are cleaved as a signal peptide. A propeptide spanning residues 20-188 (IILGSGNVND…KKASQLVVTA (169 aa)) is cleaved from the precursor. In terms of domain architecture, Peptidase M12B spans 198–394 (RYVELVIVAD…YTPKCILNEP (197 aa)). Glu201 contacts Ca(2+). Residue Asn217 is glycosylated (N-linked (GlcNAc...) asparagine). Asp285 serves as a coordination point for Ca(2+). Cystine bridges form between Cys309–Cys389, Cys349–Cys373, and Cys351–Cys356. His334 is a Zn(2+) binding site. Glu335 is a catalytic residue. Zn(2+) is bound by residues His338 and His344. Residues Cys389, Asn392, Val404, Asn407, Glu411, Glu414, and Asp417 each contribute to the Ca(2+) site. The Disintegrin domain maps to 402–488 (PPVCGNELLE…DCPTDDFHKN (87 aa)). 14 disulfides stabilise this stretch: Cys405-Cys434, Cys416-Cys429, Cys418-Cys424, Cys428-Cys451, Cys442-Cys448, Cys447-Cys473, Cys460-Cys480, Cys467-Cys499, Cys492-Cys504, Cys511-Cys561, Cys526-Cys572, Cys539-Cys549, Cys556-Cys598, and Cys592-Cys603. Positions 466–468 (ECD) match the D/ECD-tripeptide motif.

Belongs to the venom metalloproteinase (M12B) family. P-III subfamily. Requires Zn(2+) as cofactor. In terms of tissue distribution, expressed by the venom gland.

The protein localises to the secreted. In terms of biological role, snake venom metalloproteinase that impairs hemostasis in the envenomed animal. This chain is Zinc metalloproteinase-disintegrin-like 3a, found in Crotalus adamanteus (Eastern diamondback rattlesnake).